Reading from the N-terminus, the 177-residue chain is B-phycoerythrin beta chain (177 aa).

Residues C50 and C61 each coordinate (2R,3E)-phycoerythrobilin. N72 carries the post-translational modification N4-methylasparagine. (2R,3E)-phycoerythrobilin-binding residues include C82 and C158.

This sequence belongs to the phycobiliprotein family. In terms of assembly, heterotetramer of one alpha-1, one alpha-2, and two beta chains. Post-translationally, contains three covalently linked bilin chromophores.

It is found in the plastid. The protein localises to the chloroplast thylakoid membrane. Light-harvesting photosynthetic bile pigment-protein from the phycobiliprotein complex. The polypeptide is B-phycoerythrin beta chain (cpeB) (Guillardia theta (Cryptophyte)).